The sequence spans 63 residues: Beta-defensin 35 (63 aa).

Positions 1–23 (MPQTFFVFCFLFFVFLQLFPGTG) are cleaved as a signal peptide. 3 disulfides stabilise this stretch: Cys-31/Cys-58, Cys-38/Cys-52, and Cys-42/Cys-59.

It belongs to the beta-defensin family. As to expression, expressed in testis, epididymis (caput, corpus and cauda), kidney and neonatal and adult brain.

It is found in the secreted. Functionally, has antibacterial activity. The sequence is that of Beta-defensin 35 (Defb35) from Mus musculus (Mouse).